Consider the following 413-residue polypeptide: Transcription factor E2F4 (413 aa).

The interval 1–20 (MAEAGPQAPPPPGTPSRHEK) is disordered. Ala2 is modified (N-acetylalanine). The DNA-binding element occupies 16–85 (SRHEKSLGLL…KNSIQWKGVG (70 aa)). The tract at residues 43-65 (LKLAADTLAVRQKRRIYDITNVL) is leucine-zipper. Residues 48 to 85 (DTLAVRQKRRIYDITNVLEGIGLIEKKSKNSIQWKGVG) carry the DEF box motif. The interval 86-181 (PGCNTREIAD…GLNGQKKYQI (96 aa)) is dimerization. Residues 211-340 (PPEDLLQSPS…PSTSFEPIKA (130 aa)) form a disordered region. Composition is skewed to polar residues over residues 234–249 (AQSQ…QLTP) and 293–306 (TLDT…ALLD). A compositionally biased stretch (low complexity) spans 307-327 (SSSSSSSSSSSSSNSNSSSSS). The tract at residues 337–413 (PIKADPTGVL…DLFDVPVLNL (77 aa)) is transactivation. The residue at position 384 (Ser384) is a Phosphoserine. Residues 389–392 (DHDY) carry the HCFC1-binding-motif (HBM) motif. Positions 390 to 407 (HDYIYNLDESEGVCDLFD) are interaction with RBL1 and RBL2.

This sequence belongs to the E2F/DP family. In terms of assembly, component of the DRTF1/E2F transcription factor complex. Binds cooperatively with TFDP1/Dp-1 to E2F sites. The E2F4/TFDP1 dimer interacts preferentially with pocket protein RBL1, which inhibits the E2F transactivation domain. Lower affinity interaction has been found with retinoblastoma protein RB1. Interacts with TRRAP, which probably mediates its interaction with histone acetyltransferase complexes, leading to transcription activation. Interacts with HCFC1. Component of the DREAM complex (also named LINC complex) at least composed of E2F4, E2F5, LIN9, LIN37, LIN52, LIN54, MYBL1, MYBL2, RBL1, RBL2, RBBP4, TFDP1 and TFDP2. The complex exists in quiescent cells where it represses cell cycle-dependent genes. It dissociates in S phase when LIN9, LIN37, LIN52 and LIN54 form a subcomplex that binds to MYBL2. Interacts with PML (isoform PML-1, isoform PML-2, isoform PML-3, isoform PML-4 and isoform PML-5). Interacts with CEBPA (when phosphorylated). Post-translationally, differentially phosphorylated in vivo. In terms of tissue distribution, found in all tissue examined including heart, brain, placenta, lung, liver, skeletal muscle, kidney and pancreas.

The protein localises to the nucleus. Transcription activator that binds DNA cooperatively with DP proteins through the E2 recognition site, 5'-TTTC[CG]CGC-3' found in the promoter region of a number of genes whose products are involved in cell cycle regulation or in DNA replication. The DRTF1/E2F complex functions in the control of cell-cycle progression from G1 to S phase. E2F4 binds with high affinity to RBL1 and RBL2. In some instances can also bind RB1. Specifically required for multiciliate cell differentiation: together with MCIDAS and E2F5, binds and activate genes required for centriole biogenesis. The polypeptide is Transcription factor E2F4 (E2F4) (Homo sapiens (Human)).